The following is a 259-amino-acid chain: Thiazole synthase (259 aa).

K98 serves as the catalytic Schiff-base intermediate with DXP. Residues G159, 185–186 (AG), and 207–208 (NS) contribute to the 1-deoxy-D-xylulose 5-phosphate site.

Belongs to the ThiG family. In terms of assembly, homotetramer. Forms heterodimers with either ThiH or ThiS.

The protein localises to the cytoplasm. It carries out the reaction [ThiS sulfur-carrier protein]-C-terminal-Gly-aminoethanethioate + 2-iminoacetate + 1-deoxy-D-xylulose 5-phosphate = [ThiS sulfur-carrier protein]-C-terminal Gly-Gly + 2-[(2R,5Z)-2-carboxy-4-methylthiazol-5(2H)-ylidene]ethyl phosphate + 2 H2O + H(+). It functions in the pathway cofactor biosynthesis; thiamine diphosphate biosynthesis. Catalyzes the rearrangement of 1-deoxy-D-xylulose 5-phosphate (DXP) to produce the thiazole phosphate moiety of thiamine. Sulfur is provided by the thiocarboxylate moiety of the carrier protein ThiS. In vitro, sulfur can be provided by H(2)S. The protein is Thiazole synthase of Chlorobium phaeovibrioides (strain DSM 265 / 1930) (Prosthecochloris vibrioformis (strain DSM 265)).